The chain runs to 128 residues: L-ectoine synthase (128 aa).

Belongs to the ectoine synthase family.

The enzyme catalyses (2S)-4-acetamido-2-aminobutanoate = L-ectoine + H2O. It participates in amine and polyamine biosynthesis; ectoine biosynthesis; L-ectoine from L-aspartate 4-semialdehyde: step 3/3. Its function is as follows. Catalyzes the circularization of gamma-N-acetyl-alpha,gamma-diaminobutyric acid (ADABA) to ectoine (1,4,5,6-tetrahydro-2-methyl-4-pyrimidine carboxylic acid), which is an excellent osmoprotectant. In Aliivibrio fischeri (strain MJ11) (Vibrio fischeri), this protein is L-ectoine synthase.